The chain runs to 163 residues: UPF0416 protein RBE_1121 (163 aa).

This sequence belongs to the UPF0416 family.

The sequence is that of UPF0416 protein RBE_1121 from Rickettsia bellii (strain RML369-C).